The following is a 535-amino-acid chain: MTAPSKTSASPVDPSPHVAAAHDKILIVDFGSQVTQLIARRVREEGVYSEIVPFNKAEAAFAAMKPKAVILSGGPASVLDDDAPQAPLSILTAGVPILGICYGEQTLAKQLGGIVEGGHHREFGRAQIEITDDCALFDGVWEKGGKYDVWMSHGDRVTQLPEGFRGVAKAAGSPISVIADDARKFYAMQFHPEVVHTPDGAKLIRNFVRKVAGLKGDWTMRAFREEAIEKIRAQVGSGKVICGLSGGVDSAVAAVLIHEAIGDQLTCVFVDHGLLRKDEGKTVVDLFRHHYNIPLVHVDAAKLFLGELEGVSDPELKRKTIGRLFINVFEGEAKMIGGADFLAQGTLYPDVIESVSFTGGPSVTIKSHHNVGGLPERMNMQLVEPLRELFKDEVRVLGRELGLPEVFVGRHPFPGPGLAIRCPGEITAEKLEILRNADAVYIDQIRKAGLYDKIWQAFAVLLPVKTVGVMGDGRTYEYVVGLRAVTSTDGMTADFYGFEMSFLGAAATRIINEVKGVNRVVYDITSKPPGTIEWE.

The Glutamine amidotransferase type-1 domain maps to Lys-24–Asp-217. Cys-101 acts as the Nucleophile in catalysis. Active-site residues include His-191 and Glu-193. The GMPS ATP-PPase domain occupies Trp-218 to Arg-410. ATP is bound at residue Ser-245–Ala-251.

Homodimer.

The enzyme catalyses XMP + L-glutamine + ATP + H2O = GMP + L-glutamate + AMP + diphosphate + 2 H(+). It functions in the pathway purine metabolism; GMP biosynthesis; GMP from XMP (L-Gln route): step 1/1. Catalyzes the synthesis of GMP from XMP. The sequence is that of GMP synthase [glutamine-hydrolyzing] from Rhodopseudomonas palustris (strain BisB18).